The following is a 263-amino-acid chain: Endonuclease 8 (263 aa).

The Schiff-base intermediate with DNA role is filled by Pro-2. Residue Glu-3 is the Proton donor of the active site. Catalysis depends on Lys-53, which acts as the Proton donor; for beta-elimination activity. DNA-binding residues include Gln-70, Arg-125, and Asn-169. Residues 229–263 (KVFHRDGEPCERCGSIIEKTTLSSRPFYWCPGCQH) form an FPG-type zinc finger. Catalysis depends on Arg-253, which acts as the Proton donor; for delta-elimination activity.

It belongs to the FPG family. Zn(2+) serves as cofactor.

It carries out the reaction 2'-deoxyribonucleotide-(2'-deoxyribose 5'-phosphate)-2'-deoxyribonucleotide-DNA = a 3'-end 2'-deoxyribonucleotide-(2,3-dehydro-2,3-deoxyribose 5'-phosphate)-DNA + a 5'-end 5'-phospho-2'-deoxyribonucleoside-DNA + H(+). In terms of biological role, involved in base excision repair of DNA damaged by oxidation or by mutagenic agents. Acts as a DNA glycosylase that recognizes and removes damaged bases. Has a preference for oxidized pyrimidines, such as thymine glycol, 5,6-dihydrouracil and 5,6-dihydrothymine. Has AP (apurinic/apyrimidinic) lyase activity and introduces nicks in the DNA strand. Cleaves the DNA backbone by beta-delta elimination to generate a single-strand break at the site of the removed base with both 3'- and 5'-phosphates. The protein is Endonuclease 8 of Escherichia coli (strain K12 / MC4100 / BW2952).